The sequence spans 265 residues: Putative 2-aminoethylphosphonate transport system permease protein PhnV (265 aa).

The next 6 membrane-spanning stretches (helical) occupy residues 13–33 (GVVASVLFIVFFFLPLAVILM), 69–89 (LTIGFCASLFALLCGVWAALA), 104–124 (VFYLPSAIPSVSVGLGILVAF), 131–151 (MNGTLWIVLTAHFVLISAFTF), 185–205 (LPLLMPWMVSALALSLSLSMG), and 233–253 (NIADGAALTIVLVAITLLLMM). An ABC transmembrane type-1 domain is found at 65-253 (LLASLTIGFC…LVAITLLLMM (189 aa)).

This sequence belongs to the binding-protein-dependent transport system permease family.

Its subcellular location is the cell inner membrane. In terms of biological role, probably part of the PhnSTUV complex (TC 3.A.1.11.5) involved in 2-aminoethylphosphonate import. Probably responsible for the translocation of the substrate across the membrane. This Salmonella paratyphi A (strain ATCC 9150 / SARB42) protein is Putative 2-aminoethylphosphonate transport system permease protein PhnV (phnV).